Here is a 208-residue protein sequence, read N- to C-terminus: Large ribosomal subunit protein uL3 (208 aa).

Positions 123-146 are disordered; the sequence is RHGQSRGPMAHGSRYHRRPGSMGP.

The protein belongs to the universal ribosomal protein uL3 family. Part of the 50S ribosomal subunit. Forms a cluster with proteins L14 and L19.

Functionally, one of the primary rRNA binding proteins, it binds directly near the 3'-end of the 23S rRNA, where it nucleates assembly of the 50S subunit. This chain is Large ribosomal subunit protein uL3, found in Streptococcus thermophilus (strain CNRZ 1066).